We begin with the raw amino-acid sequence, 225 residues long: Lipoprotein CseA (225 aa).

A signal peptide spans 1–36; the sequence is MRGLTDGRTPRGTRRTTQAASTAVAVFVALGVSLAG. C37 carries N-palmitoyl cysteine lipidation. Residue C37 is the site of S-diacylglycerol cysteine attachment. Disordered regions lie at residues 40–77 and 205–225; these read GGTG…APDR and THND…EPDS. The segment covering 60–73 has biased composition (low complexity); the sequence is SASPAPAAKASPSK.

Its subcellular location is the cell membrane. In terms of biological role, may be involved in the stabilization of the cell envelope or may interact with the sensor protein CseC to modulate its activity, in response to cell envelope stress. This chain is Lipoprotein CseA (cseA), found in Streptomyces coelicolor (strain ATCC BAA-471 / A3(2) / M145).